Reading from the N-terminus, the 487-residue chain is Zinc finger and BTB domain-containing protein 32 (487 aa).

The region spanning 29–87 (CDTLITVGGQEFPAHSLVLAGVSQQLGRRGQWALGEGISPSTFAQLLNFVYGESVELQP) is the BTB domain. Residues 113–166 (RGDRAKKPDPGLKKHQEEPEKPSRNAERELGDPGEKQKPEQVSRTGGREQEMLH) show a composition bias toward basic and acidic residues. 2 disordered regions span residues 113 to 208 (RGDR…ADGK) and 308 to 371 (QNQL…ARSR). The span at 308 to 320 (QNQLASSSPTPGS) shows a compositional bias: polar residues. Residues 357-369 (PPRPHPPPAPPAR) show a composition bias toward pro residues. 3 C2H2-type zinc fingers span residues 373–395 (YACSVCGKRFSLKHQMETHYRVH), 401–423 (FSCSLCPQRSRDFSAMTKHLRTH), and 428–450 (YRXXLCGAGCPSLASMQAHMRGH). Positions 468–487 (SSSRPSRPSTSPCCPSSSTT) are disordered.

Belongs to the krueppel C2H2-type zinc-finger protein family. As to quaternary structure, homodimer (via PTB domain). Interacts with the N-terminal of FANCC. Interacts with ZBTB16. Interacts with GATA3.

The protein localises to the nucleus. Its function is as follows. DNA-binding protein that binds to the to a 5'-TGTACAGTGT-3' core sequence. May function as a transcriptional transactivator and transcriptional repressor. Probably exerts its repressor effect by preventing GATA3 from binding to DNA. May play a role in regulating the differentiation and activation of helper T-cells. The sequence is that of Zinc finger and BTB domain-containing protein 32 (ZBTB32) from Pan troglodytes (Chimpanzee).